A 346-amino-acid chain; its full sequence is Putative [LysW]-L-2-aminoadipate/[LysW]-L-glutamate phosphate reductase (346 aa).

An NADP(+)-binding site is contributed by 12-15 (SGFT). Residue cysteine 147 is part of the active site. Asparagine 310 contacts NADP(+).

The protein belongs to the NAGSA dehydrogenase family. Type 1 subfamily. LysY sub-subfamily.

It localises to the cytoplasm. It carries out the reaction [amino-group carrier protein]-C-terminal-N-(1-carboxy-5-oxopentan-1-yl)-L-glutamine + phosphate + NADP(+) = [amino-group carrier protein]-C-terminal-N-(1-carboxy-5-phosphooxy-5-oxopentan-1-yl)-L-glutamine + NADPH + H(+). It catalyses the reaction [amino-group carrier protein]-C-terminal-gamma-(L-glutamyl-5-semialdehyde)-L-glutamate + phosphate + NADP(+) = [amino-group carrier protein]-C-terminal-gamma-(5-phospho-L-glutamyl)-L-glutamate + NADPH + H(+). It functions in the pathway amino-acid biosynthesis; L-lysine biosynthesis via AAA pathway; L-lysine from L-alpha-aminoadipate (Thermus route): step 3/5. Its pathway is amino-acid biosynthesis; L-arginine biosynthesis. In terms of biological role, involved in both the arginine and lysine biosynthetic pathways. This chain is Putative [LysW]-L-2-aminoadipate/[LysW]-L-glutamate phosphate reductase, found in Natronomonas pharaonis (strain ATCC 35678 / DSM 2160 / CIP 103997 / JCM 8858 / NBRC 14720 / NCIMB 2260 / Gabara) (Halobacterium pharaonis).